The sequence spans 83 residues: Large ribosomal subunit protein eL31 (83 aa).

Belongs to the eukaryotic ribosomal protein eL31 family.

This chain is Large ribosomal subunit protein eL31, found in Methanococcus maripaludis (strain DSM 14266 / JCM 13030 / NBRC 101832 / S2 / LL).